The chain runs to 251 residues: GTP cyclohydrolase FolE2 (251 aa).

Belongs to the GTP cyclohydrolase IV family.

It carries out the reaction GTP + H2O = 7,8-dihydroneopterin 3'-triphosphate + formate + H(+). The protein operates within cofactor biosynthesis; 7,8-dihydroneopterin triphosphate biosynthesis; 7,8-dihydroneopterin triphosphate from GTP: step 1/1. Converts GTP to 7,8-dihydroneopterin triphosphate. This chain is GTP cyclohydrolase FolE2, found in Desulfotalea psychrophila (strain LSv54 / DSM 12343).